The chain runs to 486 residues: Cardiolipin synthase A (486 aa).

The next 2 helical transmembrane spans lie at 3-23 (TFYTVVSWLVILGYWILIAGV) and 38-58 (MAWLLIIYILPLVGIIAYLSF). 2 PLD phosphodiesterase domains span residues 219-246 (MDLRQHRKMVMIDNYIAYTGSMNMVDPR) and 399-426 (EGGLLHTKSVLVDGELSLVGTVNLDMRS). Active-site residues include histidine 224, lysine 226, aspartate 231, histidine 404, lysine 406, and aspartate 411.

The protein belongs to the phospholipase D family. Cardiolipin synthase subfamily. ClsA sub-subfamily.

The protein resides in the cell inner membrane. It carries out the reaction 2 a 1,2-diacyl-sn-glycero-3-phospho-(1'-sn-glycerol) = a cardiolipin + glycerol. Its function is as follows. Catalyzes the reversible phosphatidyl group transfer from one phosphatidylglycerol molecule to another to form cardiolipin (CL) (diphosphatidylglycerol) and glycerol. This Citrobacter koseri (strain ATCC BAA-895 / CDC 4225-83 / SGSC4696) protein is Cardiolipin synthase A.